Here is a 239-residue protein sequence, read N- to C-terminus: ATP-dependent dethiobiotin synthetase BioD (239 aa).

15–20 contacts ATP; it reads EIGKTF. Position 19 (Thr19) interacts with Mg(2+). Lys40 is an active-site residue. ATP contacts are provided by residues Asp57, 118-121, and 178-179; these read EGAG and NH. Asp57 and Glu118 together coordinate Mg(2+).

It belongs to the dethiobiotin synthetase family. In terms of assembly, homodimer. Requires Mg(2+) as cofactor.

The protein localises to the cytoplasm. The catalysed reaction is (7R,8S)-7,8-diammoniononanoate + CO2 + ATP = (4R,5S)-dethiobiotin + ADP + phosphate + 3 H(+). The protein operates within cofactor biosynthesis; biotin biosynthesis; biotin from 7,8-diaminononanoate: step 1/2. Catalyzes a mechanistically unusual reaction, the ATP-dependent insertion of CO2 between the N7 and N8 nitrogen atoms of 7,8-diaminopelargonic acid (DAPA, also called 7,8-diammoniononanoate) to form a ureido ring. This chain is ATP-dependent dethiobiotin synthetase BioD, found in Burkholderia lata (strain ATCC 17760 / DSM 23089 / LMG 22485 / NCIMB 9086 / R18194 / 383).